The primary structure comprises 283 residues: Daunorubicin resistance ABC transporter permease protein DrrB1 (283 aa).

The region spanning 53-280 (VQLIDIVLMP…PLTMRLYRNK (228 aa)) is the ABC transmembrane type-2 domain. A run of 6 helical transmembrane segments spans residues 58 to 78 (IVLM…GAFA), 85 to 105 (LQFY…VYTG), 150 to 170 (VFLG…VVGA), 171 to 191 (MLVL…LGVV), 198 to 218 (VSGT…IFVM), and 252 to 272 (FWDV…FAPL).

It belongs to the ABC-2 integral membrane protein family. As to quaternary structure, the complex is probably composed of two ATP-binding proteins (DrrA1) and two transmembrane proteins (DrrB1).

It localises to the cell membrane. In terms of biological role, part of the ABC transporter complex DrrA1B1 involved in daunorubicin efflux. Responsible for the translocation of the substrate across the membrane. Confers self-resistance to daunorubicin, an antibiotic produced by S.coeruleorubidus. This is Daunorubicin resistance ABC transporter permease protein DrrB1 from Streptomyces coeruleorubidus.